The chain runs to 514 residues: Cytochrome P450 monooxygenase MO6277 (514 aa).

The helical transmembrane segment at 6 to 26 threads the bilayer; it reads LTVLALLGGTLLLYCSGLVIY. C457 is a heme binding site.

Belongs to the cytochrome P450 family. The cofactor is heme.

Its subcellular location is the membrane. The catalysed reaction is polyporic acid + reduced [NADPH--hemoprotein reductase] + O2 = ascocorynin + oxidized [NADPH--hemoprotein reductase] + H2O + H(+). Its pathway is secondary metabolite biosynthesis. Cytochrome P450 monooxygenase that hydroxylates polyporic acid produced by the nonribosomal peptide synthetase acyN to produce the less toxic metabolite ascocorynin. The hydrophobic substrate polyporic acid might approach the active site from the membrane and, after hydroxylation into ascocorynin, leaves into the cytoplasm. MO6277 appears vital to avoid high-level accumulation of polyporic acid in the fungal membrane. This Ascocoryne sarcoides (Purple jellydisc fungus) protein is Cytochrome P450 monooxygenase MO6277.